Consider the following 629-residue polypeptide: Transmembrane 9 superfamily protein C1105.08 (629 aa).

The first 26 residues, 1–26 (MLLPSIPSCSFSFVVFVSVLLQTCFS), serve as a signal peptide directing secretion. Topologically, residues 27 to 266 (FQLTPLSPKN…MHIESRQIRW (240 aa)) are lumenal. Asn157 carries an N-linked (GlcNAc...) asparagine glycan. The helical transmembrane segment at 267-287 (IFIIHSAIIDTFLIFVVSIIL) threads the bilayer. Residues 288-337 (YRTLNRDINKYNSAFVDQEDVQEDFGWKLVHGDVFRPPRRPMLFSILLGT) lie on the Cytoplasmic side of the membrane. Residues 338 to 358 (GAQLLFMSSGIVLFAIFGIVA) form a helical membrane-spanning segment. The Lumenal segment spans residues 359–364 (PSRRGS). The chain crosses the membrane as a helical span at residues 365 to 385 (LATATVALFIISGFVSGYVSA). Topologically, residues 386–401 (LSYKLMQGMLRKRNLL) are cytoplasmic. The helical transmembrane segment at 402 to 422 (LTPFVVPGFMLAAALFFNMVF) threads the bilayer. Over 423–436 (WSKSSSSTVPFSSW) the chain is Lumenal. The helical transmembrane segment at 437-457 (LLLIFLYLLFTVPLSFVGSLI) threads the bilayer. Over 458-488 (GFRSREFVPPVRTNQIPRQIPSHSIWLSSFP) the chain is Cytoplasmic. A helical membrane pass occupies residues 489-509 (SAIIGGSIPFLVILIELFSIL). Topologically, residues 510–519 (DSLWFHPLYF) are lumenal. Residues 520 to 544 (MFGFSFFCFGILVTTCIMVSIITVY) form a helical membrane-spanning segment. Residues 545–558 (FQLCSENYNWWWRS) are Cytoplasmic-facing. Residues 559–579 (FITPGFCGIYVFIFSVFYWFF) form a helical membrane-spanning segment. The Lumenal segment spans residues 580 to 598 (KISSSSLATAVLYFGYSLL). A helical membrane pass occupies residues 599–619 (ISVLVFFLCGSVGFFGAFLFV). Topologically, residues 620 to 629 (NKIYASIKID) are cytoplasmic.

Belongs to the nonaspanin (TM9SF) (TC 9.A.2) family.

The protein resides in the golgi apparatus membrane. Its subcellular location is the vacuole membrane. This Schizosaccharomyces pombe (strain 972 / ATCC 24843) (Fission yeast) protein is Transmembrane 9 superfamily protein C1105.08.